The following is a 768-amino-acid chain: UPF0313 protein VV2143 (768 aa).

One can recognise a Radical SAM core domain in the interval 363–640; the sequence is AYDMIKTSVN…LHKALLRYHD (278 aa). Residues C377, C381, and C384 each coordinate [4Fe-4S] cluster. The disordered stretch occupies residues 674–768; that stretch reads DARTPAQRRK…GGRNQPSRAR (95 aa). Residues 679–689 show a composition bias toward basic residues; that stretch reads AQRRKSGRHGA. Residues 719–731 are compositionally biased toward polar residues; that stretch reads GGQSNSAPSRSGS.

It belongs to the UPF0313 family. [4Fe-4S] cluster is required as a cofactor.

The chain is UPF0313 protein VV2143 from Vibrio vulnificus (strain YJ016).